The primary structure comprises 144 residues: Transcriptional regulator SlyA (144 aa).

The 134-residue stretch at 2–135 (ESPLGSDLAR…LITLIAKLEH (134 aa)) folds into the HTH marR-type domain. Residues 49–72 (QIQLAKAIGIEQPSLVRTLDQLEE) constitute a DNA-binding region (H-T-H motif).

It belongs to the SlyA family. In terms of assembly, homodimer.

In terms of biological role, transcription regulator that can specifically activate or repress expression of target genes. The polypeptide is Transcriptional regulator SlyA (Shigella boydii serotype 18 (strain CDC 3083-94 / BS512)).